The primary structure comprises 638 residues: Methionine--tRNA ligase (638 aa).

The 'HIGH' region signature appears at Tyr-12–His-22. Zn(2+)-binding residues include Cys-127, Cys-130, Cys-144, and Cys-147. Residues Lys-296–Ser-300 carry the 'KMSKS' region motif. Lys-299 contacts ATP. The tRNA-binding domain occupies Asp-538–Ser-638.

It belongs to the class-I aminoacyl-tRNA synthetase family. MetG type 2A subfamily. As to quaternary structure, homodimer. It depends on Zn(2+) as a cofactor.

Its subcellular location is the cytoplasm. The catalysed reaction is tRNA(Met) + L-methionine + ATP = L-methionyl-tRNA(Met) + AMP + diphosphate. In terms of biological role, is required not only for elongation of protein synthesis but also for the initiation of all mRNA translation through initiator tRNA(fMet) aminoacylation. This chain is Methionine--tRNA ligase (metG), found in Caldanaerobacter subterraneus subsp. tengcongensis (strain DSM 15242 / JCM 11007 / NBRC 100824 / MB4) (Thermoanaerobacter tengcongensis).